Consider the following 1007-residue polypeptide: Exportin-7 (1007 aa).

Belongs to the exportin family.

It localises to the nucleus. Its subcellular location is the cytoplasm. The protein resides in the nuclear pore complex. Functionally, mediates the nuclear export of proteins (cargos) with broad substrate specificity. This chain is Exportin-7 (xpo7), found in Dictyostelium discoideum (Social amoeba).